A 311-amino-acid polypeptide reads, in one-letter code: Aquaporin Lacbi1:392091 (311 aa).

Over 1–16 (MHPQVASLFDNVYEDL) the chain is Cytoplasmic. A helical membrane pass occupies residues 17–37 (AAATLEFIGTAFFLLFGLGGI). Over 38–56 (QASTAEDTASGQPPASGIE) the chain is Extracellular. The helical transmembrane segment at 57 to 77 (HVLYISTCMGLSLVVSAWLFF) threads the bilayer. Arg78 is a topological domain (cytoplasmic). A helical transmembrane segment spans residues 79 to 99 (VTGGLFNPNISFALLLVGGLK). The short motif at 85 to 87 (NPN) is the NPA 1 element. A topological domain (extracellular) is located at residue Pro100. The helical transmembrane segment at 101 to 121 (LRFVLFCIAQLTGAIAGAAIV) threads the bilayer. Residues 122 to 143 (RGLTSAPLSVNNVLQQGTSAAQ) lie on the Cytoplasmic side of the membrane. A helical membrane pass occupies residues 144–164 (GVFIEMFITAALVLSVLMLAA). The Extracellular segment spans residues 165-168 (EKHE). A helical membrane pass occupies residues 169-189 (ATPFAPVGIGLTLFACHLFAV). The Cytoplasmic portion of the chain corresponds to 190-215 (YYTGAAMNSARAFGPAVISGFPEPQH). Residues 197 to 199 (NSA) carry the NPA 2 motif. Residues 216–236 (WVYWVGPFLGSLLGAGFYATL) form a helical membrane-spanning segment. Residues 237 to 311 (KHYKYWHLNP…TSSRTNFSPV (75 aa)) are Extracellular-facing. The interval 276–311 (DEETRNGCASNEEGVRATGDEKSSNATSSRTNFSPV) is disordered. The segment covering 288-298 (EGVRATGDEKS) has biased composition (basic and acidic residues). Over residues 299–311 (SNATSSRTNFSPV) the composition is skewed to polar residues. N-linked (GlcNAc...) asparagine glycosylation is present at Asn300.

It belongs to the MIP/aquaporin (TC 1.A.8) family.

Its subcellular location is the membrane. It catalyses the reaction H2O(in) = H2O(out). The catalysed reaction is NH4(+)(in) = NH4(+)(out). In terms of biological role, water channel required to facilitate the transport of water across membranes. Also enables low but statistically significant ammonium permeability. May be involved in fungal nitrogen (ammonium) support of the plant host in symbiosis. The sequence is that of Aquaporin Lacbi1:392091 from Laccaria bicolor (strain S238N-H82 / ATCC MYA-4686) (Bicoloured deceiver).